The sequence spans 1107 residues: DNA polymerase delta catalytic subunit (1107 aa).

The interval 1-34 (MDGKRRPGPGPGVPPKRARGGLWDDDDAPRPSQF) is disordered. The Nuclear localization signal signature appears at 4 to 19 (KRRPGPGPGVPPKRAR). R19 carries the post-translational modification Omega-N-methylarginine. K574 participates in a covalent cross-link: Glycyl lysine isopeptide (Lys-Gly) (interchain with G-Cter in SUMO2). Zn(2+) contacts are provided by C1012, C1015, C1026, and C1029. The CysA-type zinc finger occupies 1012–1029 (CIGCRTVLSHQGAVCEFC). [4Fe-4S] cluster contacts are provided by C1058, C1061, C1071, and C1076. The CysB motif signature appears at 1058 to 1076 (CQRCQGSLHEDVICTSRDC).

The protein belongs to the DNA polymerase type-B family. In terms of assembly, component of the tetrameric DNA polymerase delta complex (Pol-delta4), which consists of POLD1/p125, POLD2/p50, POLD3/p66/p68 and POLD4/p12, with POLD1 bearing both DNA polymerase and 3' to 5' proofreading exonuclease activities. Within Pol-delta4, directly interacts with POLD2 and POLD4. Following genotoxic stress by DNA-damaging agents, such as ultraviolet light and methyl methanesulfonate, or by replication stress induced by treatment with hydroxyurea or aphidicolin, Pol-delta4 is converted into a trimeric form of the complex (Pol-delta3) by POLD4 degradation. Pol-delta3 is the major form at S phase replication sites and DNA damage sites. POLD1 displays different catalytic properties depending upon the complex it is found in. It exhibits higher proofreading activity and fidelity than Pol-delta4, making it particularly well suited to respond to DNA damage. Directly interacts with PCNA, as do POLD3 and POLD4; this interaction stimulates Pol-delta4 polymerase activity. As POLD2 and POLD4, directly interacts with WRNIP1; this interaction stimulates DNA polymerase delta-mediated DNA synthesis, independently of the presence of PCNA. This stimulation may be due predominantly to an increase of initiation frequency and also to increased processivity. Also observed as a dimeric complex with POLD2 (Pol-delta2 complex). Pol-delta2 is relatively insensitive to the PCNA stimulation (2-5-fold) compared to Pol-delta4 that is stimulated by over 50-fold. The DNA polymerase delta complex interacts with POLDIP2; this interaction is probably mediated through direct binding to POLD2. Interacts with CIAO1. Interacts with POLDIP2. Interacts with RFC1. [4Fe-4S] cluster is required as a cofactor. As to expression, widely expressed, with high levels of expression in heart and lung.

Its subcellular location is the nucleus. It catalyses the reaction DNA(n) + a 2'-deoxyribonucleoside 5'-triphosphate = DNA(n+1) + diphosphate. With respect to regulation, regulated by alteration of quaternary structure. Exhibits burst rates of DNA synthesis are about 5 times faster in the presence of POLD4 (Pol-delta4 complex) than in its absence (Pol-delta3 complex), while the affinity of the enzyme for its DNA and dNTP substrates appears unchanged. The Pol-delta3 complex is more likely to proofread DNA synthesis because it cleaves single-stranded DNA twice as fast and transfers mismatched DNA from the polymerase to the exonuclease sites 9 times faster compared to the Pol-delta3 complex. Pol-delta3 also extends mismatched primers 3 times more slowly in the absence of POLD4. The conversion of Pol-delta4 into Pol-delta3 is induced by genotoxic stress or by replication stress leading POLD4 degradation. Stimulated in the presence of PCNA. This stimulation is further increased in the presence of KCTD13/PDIP1, most probably via direct interaction between KCTD13 and POLD2. In terms of biological role, as the catalytic component of the trimeric (Pol-delta3 complex) and tetrameric DNA polymerase delta complexes (Pol-delta4 complex), plays a crucial role in high fidelity genome replication, including in lagging strand synthesis, and repair. Exhibits both DNA polymerase and 3'- to 5'-exonuclease activities. Requires the presence of accessory proteins POLD2, POLD3 and POLD4 for full activity. Depending upon the absence (Pol-delta3) or the presence of POLD4 (Pol-delta4), displays differences in catalytic activity. Most notably, expresses higher proofreading activity in the context of Pol-delta3 compared with that of Pol-delta4. Although both Pol-delta3 and Pol-delta4 process Okazaki fragments in vitro, Pol-delta3 may be better suited to fulfill this task, exhibiting near-absence of strand displacement activity compared to Pol-delta4 and stalling on encounter with the 5'-blocking oligonucleotides. Pol-delta3 idling process may avoid the formation of a gap, while maintaining a nick that can be readily ligated. Along with DNA polymerase kappa, DNA polymerase delta carries out approximately half of nucleotide excision repair (NER) synthesis following UV irradiation. Under conditions of DNA replication stress, in the presence of POLD3 and POLD4, may catalyze the repair of broken replication forks through break-induced replication (BIR). Involved in the translesion synthesis (TLS) of templates carrying O6-methylguanine, 8oxoG or abasic sites. This is DNA polymerase delta catalytic subunit from Homo sapiens (Human).